The sequence spans 143 residues: Large ribosomal subunit protein uL11 (143 aa).

The protein belongs to the universal ribosomal protein uL11 family. In terms of assembly, part of the ribosomal stalk of the 50S ribosomal subunit. Interacts with L10 and the large rRNA to form the base of the stalk. L10 forms an elongated spine to which L12 dimers bind in a sequential fashion forming a multimeric L10(L12)X complex. One or more lysine residues are methylated.

Functionally, forms part of the ribosomal stalk which helps the ribosome interact with GTP-bound translation factors. This chain is Large ribosomal subunit protein uL11, found in Caulobacter vibrioides (strain ATCC 19089 / CIP 103742 / CB 15) (Caulobacter crescentus).